The following is a 203-amino-acid chain: Pyridoxal 5'-phosphate synthase subunit PdxT (203 aa).

52 to 54 (GES) is an L-glutamine binding site. Cysteine 84 acts as the Nucleophile in catalysis. Residues arginine 116 and 144–145 (IR) contribute to the L-glutamine site. Active-site charge relay system residues include histidine 184 and glutamate 186.

It belongs to the glutaminase PdxT/SNO family. In the presence of PdxS, forms a dodecamer of heterodimers. Only shows activity in the heterodimer.

The catalysed reaction is aldehydo-D-ribose 5-phosphate + D-glyceraldehyde 3-phosphate + L-glutamine = pyridoxal 5'-phosphate + L-glutamate + phosphate + 3 H2O + H(+). It carries out the reaction L-glutamine + H2O = L-glutamate + NH4(+). It functions in the pathway cofactor biosynthesis; pyridoxal 5'-phosphate biosynthesis. Catalyzes the hydrolysis of glutamine to glutamate and ammonia as part of the biosynthesis of pyridoxal 5'-phosphate. The resulting ammonia molecule is channeled to the active site of PdxS. This chain is Pyridoxal 5'-phosphate synthase subunit PdxT, found in Aeropyrum pernix (strain ATCC 700893 / DSM 11879 / JCM 9820 / NBRC 100138 / K1).